We begin with the raw amino-acid sequence, 299 residues long: MLENVDLISAIITPFDDQLKINFTALERLTNHLIETGNTGFIIGGTTGETPTLTHAEKLGLYTRFAEIVAGRVPIIAGTGSNNTQATIDFTKEVRQIDGIIAALVVTPYYNKPNQRGMVAHFKTVARQADFPIMMYNIPGRTGVQMENATIVELSQEPNIIGIKQCTNLNDIGFLVENTPNDFAVYTGNDPETLGAVALGANGVASVASHIYGYQIRALLDAVKHGDLLKAGKLQRELTPKMEALFLYPSPAPVKAVLNAQNWSVGSPRLPILPLNQKEKLNLAHQLGVNHLADVQLHY.

Thr47 provides a ligand contact to pyruvate. Tyr136 acts as the Proton donor/acceptor in catalysis. The active-site Schiff-base intermediate with substrate is the Lys164. A pyruvate-binding site is contributed by Ala205.

This sequence belongs to the DapA family. Homotetramer; dimer of dimers.

It is found in the cytoplasm. It catalyses the reaction L-aspartate 4-semialdehyde + pyruvate = (2S,4S)-4-hydroxy-2,3,4,5-tetrahydrodipicolinate + H2O + H(+). It functions in the pathway amino-acid biosynthesis; L-lysine biosynthesis via DAP pathway; (S)-tetrahydrodipicolinate from L-aspartate: step 3/4. In terms of biological role, catalyzes the condensation of (S)-aspartate-beta-semialdehyde [(S)-ASA] and pyruvate to 4-hydroxy-tetrahydrodipicolinate (HTPA). The protein is 4-hydroxy-tetrahydrodipicolinate synthase of Pediococcus pentosaceus (strain ATCC 25745 / CCUG 21536 / LMG 10740 / 183-1w).